A 495-amino-acid chain; its full sequence is uncharacterized protein (495 aa).

The tract at residues 337 to 360 (STSNRESDCSGNEDDSSNAKYAKK) is disordered.

This is an uncharacterized protein from Caenorhabditis elegans.